Reading from the N-terminus, the 148-residue chain is Ribosomal RNA large subunit methyltransferase H 2 (148 aa).

S-adenosyl-L-methionine contacts are provided by residues L74, G106, and 125-130 (FSKMTF).

Belongs to the RNA methyltransferase RlmH family. As to quaternary structure, homodimer.

The protein localises to the cytoplasm. The catalysed reaction is pseudouridine(1915) in 23S rRNA + S-adenosyl-L-methionine = N(3)-methylpseudouridine(1915) in 23S rRNA + S-adenosyl-L-homocysteine + H(+). Specifically methylates the pseudouridine at position 1915 (m3Psi1915) in 23S rRNA. This is Ribosomal RNA large subunit methyltransferase H 2 from Caldanaerobacter subterraneus subsp. tengcongensis (strain DSM 15242 / JCM 11007 / NBRC 100824 / MB4) (Thermoanaerobacter tengcongensis).